Here is a 492-residue protein sequence, read N- to C-terminus: Cysteine--tRNA ligase (492 aa).

Cys29 contributes to the Zn(2+) binding site. A 'HIGH' region motif is present at residues 31–41 (PTVYDYAHIGN). The Zn(2+) site is built by Cys222, His247, and Glu251. The short motif at 279-283 (KMSKS) is the 'KMSKS' region element. Lys282 provides a ligand contact to ATP.

The protein belongs to the class-I aminoacyl-tRNA synthetase family. As to quaternary structure, monomer. Zn(2+) serves as cofactor.

It localises to the cytoplasm. The enzyme catalyses tRNA(Cys) + L-cysteine + ATP = L-cysteinyl-tRNA(Cys) + AMP + diphosphate. The sequence is that of Cysteine--tRNA ligase from Treponema denticola (strain ATCC 35405 / DSM 14222 / CIP 103919 / JCM 8153 / KCTC 15104).